The following is a 1377-amino-acid chain: DNA-directed RNA polymerase subunit beta (1377 aa).

The protein belongs to the RNA polymerase beta chain family. In terms of assembly, the RNAP catalytic core consists of 2 alpha, 1 beta, 1 beta' and 1 omega subunit. When a sigma factor is associated with the core the holoenzyme is formed, which can initiate transcription.

The catalysed reaction is RNA(n) + a ribonucleoside 5'-triphosphate = RNA(n+1) + diphosphate. In terms of biological role, DNA-dependent RNA polymerase catalyzes the transcription of DNA into RNA using the four ribonucleoside triphosphates as substrates. This is DNA-directed RNA polymerase subunit beta from Azoarcus sp. (strain BH72).